We begin with the raw amino-acid sequence, 498 residues long: Ammonium transporter 3 member 1 (498 aa).

11 helical membrane-spanning segments follow: residues 33 to 53 (ISAT…YGSI), 58 to 78 (WAVN…LCWV), 143 to 163 (MVYF…GSLL), 171 to 191 (WMLF…FSLW), 206 to 226 (GGYV…YWVG), 241 to 261 (VLLM…FNGG), 276 to 296 (NTNI…VIFF), 301 to 321 (VIGA…GAGL), 325 to 345 (WAAI…MMVV), 369 to 389 (GFLG…SLFL), and 412 to 432 (VAGA…VCLA). Positions 478–498 (DNNDTHHNNNKAAPSGVTQNV) are disordered. Residues 487 to 498 (NKAAPSGVTQNV) are compositionally biased toward polar residues.

It belongs to the ammonia transporter channel (TC 1.A.11.2) family. In terms of tissue distribution, expressed in root.

Its subcellular location is the membrane. Involved in ammonium transport. The protein is Ammonium transporter 3 member 1 (AMT3-1) of Oryza sativa subsp. japonica (Rice).